The sequence spans 170 residues: Probable calcium-binding protein CML27 (170 aa).

Ala2 carries the N-acetylalanine modification. EF-hand domains are found at residues 19-54, 55-85, 88-123, and 136-159; these read ANPE…MGTS, YTET…TLCR, SSAA…LGMS, and VDAD…SSLL. 19 residues coordinate Ca(2+): Asp32, Asn34, Asp36, Lys38, Glu43, Asp68, Asp70, Asp72, Tyr74, Glu79, Asp101, Asp103, Asn105, Glu112, Asp137, Asp139, Asp141, Asn143, and Glu148.

In terms of biological role, potential calcium sensor. The sequence is that of Probable calcium-binding protein CML27 (CML27) from Arabidopsis thaliana (Mouse-ear cress).